A 772-amino-acid polypeptide reads, in one-letter code: E3 ubiquitin-protein ligase UHRF1 (772 aa).

One can recognise a Ubiquitin-like domain in the interval Met1–Pro77. The disordered stretch occupies residues Ser90 to Ala111. 2 tudor-like regions span residues Ser129 to Arg205 and Glu212 to Pro281. The tract at residues Pro291–Glu299 is linker. The PHD-type zinc finger occupies Gly297–Asp364. Histone H3R2me0 binding stretches follow at residues Cys331–Asp335 and Pro351–Asp353. The YDG domain maps to Gly417–Arg580. The interval His443 to Val444 is required to promote base flipping. DNA contacts are provided by residues Ala461 to Gly462 and Asp467. Required for formation of a 5-methylcytosine-binding pocket stretches follow at residues Tyr464–Asp467 and Tyr476–Ser479. Residues Ser615 to Asp626 show a composition bias toward basic and acidic residues. The interval Ser615–Lys649 is disordered. The RING-type zinc-finger motif lies at Cys703 to Arg742.

Its subcellular location is the nucleus. It carries out the reaction S-ubiquitinyl-[E2 ubiquitin-conjugating enzyme]-L-cysteine + [acceptor protein]-L-lysine = [E2 ubiquitin-conjugating enzyme]-L-cysteine + N(6)-ubiquitinyl-[acceptor protein]-L-lysine.. The protein operates within protein modification; protein ubiquitination. Its function is as follows. Multidomain protein that acts as a key epigenetic regulator by bridging DNA methylation and chromatin modification. Specifically recognizes and binds hemimethylated DNA at replication forks via its YDG domain and recruits dnmt1 methyltransferase to ensure faithful propagation of the DNA methylation patterns through DNA replication. In addition to its role in maintenance of DNA methylation, also plays a key role in chromatin modification: through its tudor-like regions and PHD-type zinc fingers, specifically recognizes and binds histone H3 trimethylated at 'Lys-9' (H3K9me3) and unmethylated at 'Arg-2' (H3R2me0), respectively, and recruits chromatin proteins. Enriched in pericentric heterochromatin where it recruits different chromatin modifiers required for this chromatin replication. Also localizes to euchromatic regions where it negatively regulates transcription possibly by impacting DNA methylation and histone modifications. Has E3 ubiquitin-protein ligase activity by mediating the ubiquitination of target proteins. However, it is still unclear how E3 ubiquitin-protein ligase activity is related to its role in chromatin in vivo. The chain is E3 ubiquitin-protein ligase UHRF1 (uhrf1) from Xenopus laevis (African clawed frog).